The sequence spans 423 residues: Glucose-1-phosphate adenylyltransferase (423 aa).

Alpha-D-glucose 1-phosphate-binding positions include Y107, G172, 187-188 (EK), and S205.

This sequence belongs to the bacterial/plant glucose-1-phosphate adenylyltransferase family. As to quaternary structure, homotetramer.

It carries out the reaction alpha-D-glucose 1-phosphate + ATP + H(+) = ADP-alpha-D-glucose + diphosphate. Its pathway is glycan biosynthesis; glycogen biosynthesis. In terms of biological role, involved in the biosynthesis of ADP-glucose, a building block required for the elongation reactions to produce glycogen. Catalyzes the reaction between ATP and alpha-D-glucose 1-phosphate (G1P) to produce pyrophosphate and ADP-Glc. This is Glucose-1-phosphate adenylyltransferase from Cereibacter sphaeroides (strain ATCC 17025 / ATH 2.4.3) (Rhodobacter sphaeroides).